The following is a 426-amino-acid chain: Enolase (426 aa).

Q163 serves as a coordination point for (2R)-2-phosphoglycerate. The active-site Proton donor is E205. Mg(2+)-binding residues include D242, E285, and D312. (2R)-2-phosphoglycerate is bound by residues K337, R366, S367, and K388. Catalysis depends on K337, which acts as the Proton acceptor.

Belongs to the enolase family. Component of the RNA degradosome, a multiprotein complex involved in RNA processing and mRNA degradation. Mg(2+) is required as a cofactor.

It is found in the cytoplasm. The protein localises to the secreted. Its subcellular location is the cell surface. It catalyses the reaction (2R)-2-phosphoglycerate = phosphoenolpyruvate + H2O. It functions in the pathway carbohydrate degradation; glycolysis; pyruvate from D-glyceraldehyde 3-phosphate: step 4/5. In terms of biological role, catalyzes the reversible conversion of 2-phosphoglycerate (2-PG) into phosphoenolpyruvate (PEP). It is essential for the degradation of carbohydrates via glycolysis. This is Enolase from Nitrosococcus oceani (strain ATCC 19707 / BCRC 17464 / JCM 30415 / NCIMB 11848 / C-107).